Reading from the N-terminus, the 71-residue chain is Sec-independent protein translocase protein TatA (71 aa).

Residues 1 to 21 form a helical membrane-spanning segment; the sequence is MGASPVQLLIVLFIAVLVFGG.

Belongs to the TatA/E family. As to quaternary structure, the Tat system comprises two distinct complexes: a TatABC complex, containing multiple copies of TatA, TatB and TatC subunits, and a separate TatA complex, containing only TatA subunits. Substrates initially bind to the TatABC complex, which probably triggers association of the separate TatA complex to form the active translocon.

The protein resides in the cell inner membrane. Functionally, part of the twin-arginine translocation (Tat) system that transports large folded proteins containing a characteristic twin-arginine motif in their signal peptide across membranes. TatA could form the protein-conducting channel of the Tat system. The sequence is that of Sec-independent protein translocase protein TatA from Dichelobacter nodosus (strain VCS1703A).